The primary structure comprises 278 residues: Envelope glycoprotein L (278 aa).

The signal sequence occupies residues M1 to S30. The region spanning V43–E256 is the gL betaherpesvirus-type domain. The cysteines at positions 154 and 159 are disulfide-linked.

This sequence belongs to the herpesviridae glycoprotein L (gL) family. Betaherpesvirinae gL subfamily. In terms of assembly, interacts with glycoprotein H (gH); this interaction is necessary for the correct processing and cell surface expression of gH. Forms the envelope pentamer complex (PC) composed of gH, gL, UL128, UL130, and UL131A. The pentamer interacts with host NRP2. Forms the envelope trimer complex composed of gH, gL, and gO. The trimer interacts with host PDGFRA.

It is found in the virion membrane. The protein resides in the host cell membrane. Its subcellular location is the host Golgi apparatus. It localises to the host trans-Golgi network. In terms of biological role, the heterodimer glycoprotein H-glycoprotein L is required for the fusion of viral and plasma membranes leading to virus entry into the host cell. Acts as a functional inhibitor of gH and maintains gH in an inhibited form. Upon binding to host integrins, gL dissociates from gH leading to activation of the viral fusion glycoproteins gB and gH. In human cytomegalovirus, forms two distincts complexes to mediate viral entry, a trimer and a pentamer at the surface of the virion envelope. The gH-gL-gO trimer is required for infection in fibroblasts by interacting with host PDGFRA. The gH-gL-UL128-UL130-UL131A pentamer is essential for viral entry in epithelial, endothelial and myeloid cells via interaction with host NRP2. The polypeptide is Envelope glycoprotein L (Human cytomegalovirus (strain AD169) (HHV-5)).